A 254-amino-acid chain; its full sequence is Urease accessory protein UreF (254 aa).

Residues 1–11 are compositionally biased toward basic and acidic residues; the sequence is MDKGKSVKSTE. The tract at residues 1–25 is disordered; the sequence is MDKGKSVKSTEKSVGIPPKTPKTDN.

The protein belongs to the UreF family. In terms of assembly, ureH, UreF and UreG form a complex that acts as a GTP-hydrolysis-dependent molecular chaperone, activating the urease apoprotein by helping to assemble the nickel containing metallocenter of UreC. The UreE protein probably delivers the nickel.

It is found in the cytoplasm. In terms of biological role, required for maturation of urease via the functional incorporation of the urease nickel metallocenter. The polypeptide is Urease accessory protein UreF (Helicobacter pylori (strain P12)).